The sequence spans 608 residues: FAD-binding monooxygenase ktnD (608 aa).

Asparagine 4 is a glycosylation site (N-linked (GlcNAc...) asparagine). Residues 17-37 (ATVVIIGAGVSGMCMAIDLLH) form a helical membrane-spanning segment. FAD is bound by residues 56 to 59 (TWAN), 68 to 69 (DV), and tyrosine 74. Residue 66–68 (ASD) participates in NADP(+) binding. N-linked (GlcNAc...) asparagine glycosylation occurs at asparagine 114. Residues 201–207 (NGASAIQ) and 224–225 (RS) contribute to the NADP(+) site. Residue asparagine 325 is glycosylated (N-linked (GlcNAc...) asparagine). A helical membrane pass occupies residues 535-555 (ALVSNVTLFLGVALAAGGVYW).

The protein belongs to the FAD-binding monooxygenase family. FAD serves as cofactor.

It localises to the membrane. In terms of biological role, non-reducing polyketide synthase; part of the gene cluster that mediates the biosynthesis of the bicoumarin kotanin. The non-reducing polyketide synthase ktnS first catalyzes the formation of the pentaketidic 4,7-dihydroxy-5-methylcoumarin from acetyl coenzyme A and 4 malonyl coenzyme A molecules. Further O-methylation by ktnB leads to the formation of 7-demethylsiderin. Then, an oxidative phenol coupling catalyzed by the cytochrome P450 monooxygenase ktnC forms the 8,8'-dimer P-orlandin via dimerization the monomeric precursor, 7-demethylsiderin. P-orlandin is subsequently O-methylated in a stepwise fashion to demethylkotanin and kotanin. The function of ktnD within the pathway has not been determined yet. This is FAD-binding monooxygenase ktnD from Aspergillus niger (strain ATCC MYA-4892 / CBS 513.88 / FGSC A1513).